The sequence spans 148 residues: 3-dehydroquinate dehydratase (148 aa).

The active-site Proton acceptor is Tyr23. Asn75, His81, and Asp88 together coordinate substrate. The active-site Proton donor is the His101. Substrate is bound by residues 102–103 and Arg112; that span reads LS.

It belongs to the type-II 3-dehydroquinase family. Homododecamer.

The catalysed reaction is 3-dehydroquinate = 3-dehydroshikimate + H2O. It functions in the pathway metabolic intermediate biosynthesis; chorismate biosynthesis; chorismate from D-erythrose 4-phosphate and phosphoenolpyruvate: step 3/7. Its function is as follows. Catalyzes a trans-dehydration via an enolate intermediate. This Xanthomonas oryzae pv. oryzae (strain MAFF 311018) protein is 3-dehydroquinate dehydratase.